The primary structure comprises 346 residues: Heat-inducible transcription repressor HrcA (346 aa).

The protein belongs to the HrcA family.

Its function is as follows. Negative regulator of class I heat shock genes (grpE-dnaK-dnaJ and groELS operons). Prevents heat-shock induction of these operons. The chain is Heat-inducible transcription repressor HrcA from Pediococcus pentosaceus (strain ATCC 25745 / CCUG 21536 / LMG 10740 / 183-1w).